Consider the following 267-residue polypeptide: Indole-3-glycerol phosphate synthase (267 aa).

This sequence belongs to the TrpC family.

It carries out the reaction 1-(2-carboxyphenylamino)-1-deoxy-D-ribulose 5-phosphate + H(+) = (1S,2R)-1-C-(indol-3-yl)glycerol 3-phosphate + CO2 + H2O. The protein operates within amino-acid biosynthesis; L-tryptophan biosynthesis; L-tryptophan from chorismate: step 4/5. This is Indole-3-glycerol phosphate synthase from Cupriavidus taiwanensis (strain DSM 17343 / BCRC 17206 / CCUG 44338 / CIP 107171 / LMG 19424 / R1) (Ralstonia taiwanensis (strain LMG 19424)).